The following is a 263-amino-acid chain: NADH dehydrogenase [ubiquinone] iron-sulfur protein 3, mitochondrial (263 aa).

Residues 1 to 35 (MVAAVARLWWRGLLGASALTRGAGRPSVLLLPVRR) constitute a mitochondrion transit peptide.

This sequence belongs to the complex I 30 kDa subunit family. As to quaternary structure, core subunit of respiratory chain NADH dehydrogenase (Complex I) which is composed of 45 different subunits. Interacts with NDUFAF3. Interacts with RAB5IF. Found in subcomplexes containing subunits NDUFS2, MT-ND1 and NDUFA13.

The protein localises to the mitochondrion inner membrane. It carries out the reaction a ubiquinone + NADH + 5 H(+)(in) = a ubiquinol + NAD(+) + 4 H(+)(out). In terms of biological role, core subunit of the mitochondrial membrane respiratory chain NADH dehydrogenase (Complex I) which catalyzes electron transfer from NADH through the respiratory chain, using ubiquinone as an electron acceptor. Essential for the catalytic activity and assembly of complex I. The sequence is that of NADH dehydrogenase [ubiquinone] iron-sulfur protein 3, mitochondrial (NDUFS3) from Gorilla gorilla gorilla (Western lowland gorilla).